The sequence spans 56 residues: Endoregulin (56 aa).

The helical transmembrane segment at 25–45 (LTVIGLFTSTFLLFVLFAVVF) threads the bilayer.

In terms of assembly, homooligomer. Can also form heterooligomers with other sarcoplasmic/endoplasmic reticulum calcium ATPase (SERCA) regulators ARLN, PLN, SLN and STRIT1/DWORF. Monomer. Interacts as a monomer with ATP2A2/SERCA2; the interaction results in inhibition of ATP2A2 Ca(2+) affinity. As to expression, largely expressed in non-muscle tissues with the exception of weak expression in body wall muscles at 14.5 dpc. Expressed in epithelial cells of the trachea, bronchus, lung, intestine, pancreas, and liver.

The protein localises to the endoplasmic reticulum membrane. Functionally, inhibits the activity of the calcium ATPases ATP2A2/SERCA2 and ATP2A3/SERCA3 by decreasing their apparent affinity for Ca(2+). The chain is Endoregulin (Erln) from Mus musculus (Mouse).